The primary structure comprises 588 residues: MACKVTGPNRHLTSVLEMSSFVYWPRSRQQAHNFPMQAVEQKLADATRTLHAKSSLQPSLSIETPKSKENDESGCESSNCMFHPHTIKSEPNFCFAREFKSVPDDFRIGGGDLQMGNNSKRLTCVIDTNRVDMAGILPDNMSFRGLPENKSLLVSAQIEVIPCKVCGDKSSGVHYGVITCEGCKGFFRRSQSSIVNYQCPRQKNCVVDRVNRNRCQYCRLKKCIELGMSRDAVKFGRMSKKQREKVEDEVRMHKELAANGLGYQAIYGDYSPPPSHPSYCFDQSMYGHYPSGTSTPVNGYSIAVAATPTTPMPQNMYGATPSSTNGTQYVAHQATGGSFPSPQVPEEDVATRVIRAFNQQHSSYTTQHGVCNVDPDCIPHLSRAGGWELFARELNPLIQAIIEFAKSIDGFMNLPQETQIQLLKGSVFELSLVFAAMYYNVDAQAVCGERYSVPFACLIAEDDAEMQLIVEVNNTLQEIVHLQPHQSELALLAAGLILEQVSSSHGIGILDTATIATAETLKNALYQSVMPRIGCMEDTIHRIQDVETRIRQTARLHQEALQNFRMSDPTSSEKLPALYKELFTADRP.

Residues 50-73 (LHAKSSLQPSLSIETPKSKENDES) are disordered. Polar residues predominate over residues 52-64 (AKSSLQPSLSIET). Positions 160-235 (VIPCKVCGDK…LGMSRDAVKF (76 aa)) form a DNA-binding region, nuclear receptor. 2 consecutive NR C4-type zinc fingers follow at residues 163–183 (CKVC…CEGC) and 199–223 (CPRQ…LKKC). Residues 345–586 (PEEDVATRVI…ALYKELFTAD (242 aa)) enclose the NR LBD domain.

It belongs to the nuclear hormone receptor family. NR1 subfamily. Expressed in the germline and oocytes and is a maternal gene product. In males and sperm-producing hermaphrodites, expressed in early pachytene spermatocytes, increasing in level throughout late pachytene. Expression is undetectable in meiotically dividing spermatocytes or mature spermatids.

The protein resides in the nucleus. Its function is as follows. Orphan nuclear receptor. Transcription factor. Modulates expression of target genes, such as Period protein homolog lin-42 and microRNA let-7, by binding to hormone response elements (HRE). Involved in promoting oscillatory expression of the primary transcripts of let-7 and paralogous microRNAs miR-48, miR-84, and miR-241. Plays a role in normal development and required to regulate each larval molt. Involved in regulating both the frequency and number of molts, acting as part of a negative feedback loop with the let-7 family of microRNAs, perhaps contributing to a self-sustaining molecular-genetic oscillator. Positively modulates expression of collagen and hedgehog-related genes. Involved in development of the gonad and associated epidermal structures. Required in spermatogenesis, acting following the sperm/oocyte cell fate decision, downstream of the canonical sex-determination pathway. Involved in regulating formation of the sperm-specific fibrous body-membranous organelle (FB-MO) complexes, acting independently of transcription regulator spe-44. The polypeptide is Nuclear hormone receptor family member nhr-23 (Caenorhabditis elegans).